A 293-amino-acid chain; its full sequence is GDT1-like protein 3 (293 aa).

Positions 1–25 (MGLISNPTRLILVATIFFLVSSISG) are cleaved as a signal peptide. Helical transmembrane passes span 89–109 (FSMI…ALMA), 115–135 (ATVL…STGL), 148–168 (TNSA…YIAW), 200–220 (LFSR…FLAE), 238–258 (AIGV…LAVV), and 272–292 (VATV…FYPP).

This sequence belongs to the GDT1 family.

It localises to the membrane. This Arabidopsis thaliana (Mouse-ear cress) protein is GDT1-like protein 3.